Reading from the N-terminus, the 113-residue chain is Integration host factor subunit alpha (113 aa).

Disordered stretches follow at residues 59–80 and 94–113; these read GNFQ…GETI and QKLK…ASAE. Residues 104–113 show a composition bias toward pro residues; the sequence is NSPPDPASAE.

Belongs to the bacterial histone-like protein family. As to quaternary structure, heterodimer of an alpha and a beta chain.

In terms of biological role, this protein is one of the two subunits of integration host factor, a specific DNA-binding protein that functions in genetic recombination as well as in transcriptional and translational control. This Bordetella pertussis (strain Tohama I / ATCC BAA-589 / NCTC 13251) protein is Integration host factor subunit alpha.